The chain runs to 551 residues: Probable 4-coumarate--CoA ligase 2 (551 aa).

The ATP site is built by Ser205, Ser206, Gly207, Thr208, Thr209, and Lys213. Residues Tyr253 and Thr257 each contribute to the (E)-4-coumaroyl-AMP site. Lys274 provides a ligand contact to CoA. The SBD1 stretch occupies residues 276–346 (EFVRFLDLIQ…RFKGKLIIKQ (71 aa)). (E)-4-coumaroyl-AMP contacts are provided by Ala323, Gln346, Gly347, and Thr351. Residues Gln346, Gly347, Thr351, Asp430, and Arg445 each contribute to the ATP site. The interval 347–409 (GYGATELSPA…IKGPNVMLGY (63 aa)) is SBD2. Residues Lys447 and Lys451 each contribute to the (E)-4-coumaroyl-AMP site. Positions 453 and 454 each coordinate CoA. Residue Lys537 coordinates ATP.

The protein belongs to the ATP-dependent AMP-binding enzyme family. The cofactor is Mg(2+).

It catalyses the reaction (E)-4-coumarate + ATP + CoA = (E)-4-coumaroyl-CoA + AMP + diphosphate. The enzyme catalyses (E)-4-coumarate + ATP + H(+) = (E)-4-coumaroyl-AMP + diphosphate. It carries out the reaction (E)-4-coumaroyl-AMP + CoA = (E)-4-coumaroyl-CoA + AMP + H(+). It functions in the pathway phytoalexin biosynthesis; 3,4',5-trihydroxystilbene biosynthesis; 3,4',5-trihydroxystilbene from trans-4-coumarate: step 1/2. Carboxylate--CoA ligase that may use 4-coumarate as substrate. Follows a two-step reaction mechanism, wherein the carboxylate substrate first undergoes adenylation by ATP, followed by a thioesterification in the presence of CoA to yield the final CoA thioester. This chain is Probable 4-coumarate--CoA ligase 2 (4cl2), found in Dictyostelium discoideum (Social amoeba).